The primary structure comprises 104 residues: Integration host factor subunit beta (104 aa).

Positions 83-95 are enriched in basic and acidic residues; that stretch reads GKEMRERLNRDSG. The segment at 83 to 104 is disordered; that stretch reads GKEMRERLNRDSGDDAPTSDTA.

Belongs to the bacterial histone-like protein family. As to quaternary structure, heterodimer of an alpha and a beta chain.

This protein is one of the two subunits of integration host factor, a specific DNA-binding protein that functions in genetic recombination as well as in transcriptional and translational control. This is Integration host factor subunit beta from Rhodopseudomonas palustris (strain ATCC BAA-98 / CGA009).